The sequence spans 395 residues: Tryptophan synthase beta chain (395 aa).

N6-(pyridoxal phosphate)lysine is present on lysine 89.

This sequence belongs to the TrpB family. As to quaternary structure, tetramer of two alpha and two beta chains. The cofactor is pyridoxal 5'-phosphate.

The catalysed reaction is (1S,2R)-1-C-(indol-3-yl)glycerol 3-phosphate + L-serine = D-glyceraldehyde 3-phosphate + L-tryptophan + H2O. It functions in the pathway amino-acid biosynthesis; L-tryptophan biosynthesis; L-tryptophan from chorismate: step 5/5. Its function is as follows. The beta subunit is responsible for the synthesis of L-tryptophan from indole and L-serine. In Fusobacterium nucleatum subsp. nucleatum (strain ATCC 25586 / DSM 15643 / BCRC 10681 / CIP 101130 / JCM 8532 / KCTC 2640 / LMG 13131 / VPI 4355), this protein is Tryptophan synthase beta chain.